Here is an 807-residue protein sequence, read N- to C-terminus: Putative transmembrane protein ORF807 (807 aa).

Helical transmembrane passes span 210-230, 234-254, 270-290, 459-479, and 657-677; these read VLML…SDIL, GLST…IVYF, VTIQ…FVIL, ILIG…LVLT, and VALL…MPLV.

Its subcellular location is the host membrane. The protein is Putative transmembrane protein ORF807 of Acidianus filamentous virus 1 (isolate United States/Yellowstone) (AFV-1).